The sequence spans 138 residues: Cysteine desulfuration protein SufE (138 aa).

Cys-51 serves as the catalytic Cysteine persulfide intermediate.

This sequence belongs to the SufE family. In terms of assembly, homodimer. Interacts with SufS.

The protein resides in the cytoplasm. It functions in the pathway cofactor biosynthesis; iron-sulfur cluster biosynthesis. Participates in cysteine desulfuration mediated by SufS. Cysteine desulfuration mobilizes sulfur from L-cysteine to yield L-alanine and constitutes an essential step in sulfur metabolism for biosynthesis of a variety of sulfur-containing biomolecules. Functions as a sulfur acceptor for SufS, by mediating the direct transfer of the sulfur atom from the S-sulfanylcysteine of SufS, an intermediate product of cysteine desulfuration process. This chain is Cysteine desulfuration protein SufE, found in Shigella flexneri serotype 5b (strain 8401).